The chain runs to 371 residues: Putative glutamate--cysteine ligase 2 (371 aa).

It belongs to the glutamate--cysteine ligase type 2 family. YbdK subfamily.

The enzyme catalyses L-cysteine + L-glutamate + ATP = gamma-L-glutamyl-L-cysteine + ADP + phosphate + H(+). Functionally, ATP-dependent carboxylate-amine ligase which exhibits weak glutamate--cysteine ligase activity. The sequence is that of Putative glutamate--cysteine ligase 2 from Cupriavidus taiwanensis (strain DSM 17343 / BCRC 17206 / CCUG 44338 / CIP 107171 / LMG 19424 / R1) (Ralstonia taiwanensis (strain LMG 19424)).